Consider the following 98-residue polypeptide: NADH-ubiquinone oxidoreductase chain 4L (98 aa).

3 helical membrane-spanning segments follow: residues 1–21, 29–49, and 61–81; these read MSMV…GLLM, SLLC…LTIL, and IILL…LVMV.

Belongs to the complex I subunit 4L family. In terms of assembly, core subunit of respiratory chain NADH dehydrogenase (Complex I) which is composed of 45 different subunits.

It is found in the mitochondrion inner membrane. It catalyses the reaction a ubiquinone + NADH + 5 H(+)(in) = a ubiquinol + NAD(+) + 4 H(+)(out). Core subunit of the mitochondrial membrane respiratory chain NADH dehydrogenase (Complex I) which catalyzes electron transfer from NADH through the respiratory chain, using ubiquinone as an electron acceptor. Part of the enzyme membrane arm which is embedded in the lipid bilayer and involved in proton translocation. This Bos mutus grunniens (Wild yak) protein is NADH-ubiquinone oxidoreductase chain 4L (MT-ND4L).